The following is a 231-amino-acid chain: MSEIKDVIVQGLWKNNSALVQLLGLCPLLAVTSTATNALGLGLATTLVLTLTNLTISTLRHWTPAEIRIPIYVMIIASVVSAVQMLINAYAFGLYQSLGIFIPLIVTNCIVVGRAEAFAAKKGPALSALDGFSIGMGATCAMFVLGSLREIIGNGTLFDGADALLGSWAKVLRVEIFHTDSPFLLAMLPPGAFIGLGLMLAGKYLIDERMKKRRAEAAAERALPNGETGNV.

6 helical membrane-spanning segments follow: residues 18–38, 39–59, 63–83, 86–106, 125–145, and 182–202; these read ALVQLLGLCPLLAVTSTATNA, LGLGLATTLVLTLTNLTISTL, TPAEIRIPIYVMIIASVVSAV, LINAYAFGLYQSLGIFIPLIV, ALSALDGFSIGMGATCAMFVL, and PFLLAMLPPGAFIGLGLMLAG.

Belongs to the NqrDE/RnfAE family. As to quaternary structure, the complex is composed of six subunits: RsxA, RsxB, RsxC, RsxD, RsxE and RsxG.

The protein resides in the cell inner membrane. Functionally, part of a membrane-bound complex that couples electron transfer with translocation of ions across the membrane. Required to maintain the reduced state of SoxR. This Escherichia coli (strain ATCC 8739 / DSM 1576 / NBRC 3972 / NCIMB 8545 / WDCM 00012 / Crooks) protein is Ion-translocating oxidoreductase complex subunit E.